The primary structure comprises 297 residues: Ribosomal RNA small subunit methyltransferase A (297 aa).

6 residues coordinate S-adenosyl-L-methionine: Asn31, Leu33, Gly58, Glu79, Asp104, and Asn129.

This sequence belongs to the class I-like SAM-binding methyltransferase superfamily. rRNA adenine N(6)-methyltransferase family. RsmA subfamily.

It is found in the cytoplasm. The enzyme catalyses adenosine(1518)/adenosine(1519) in 16S rRNA + 4 S-adenosyl-L-methionine = N(6)-dimethyladenosine(1518)/N(6)-dimethyladenosine(1519) in 16S rRNA + 4 S-adenosyl-L-homocysteine + 4 H(+). Its function is as follows. Specifically dimethylates two adjacent adenosines (A1518 and A1519) in the loop of a conserved hairpin near the 3'-end of 16S rRNA in the 30S particle. May play a critical role in biogenesis of 30S subunits. The polypeptide is Ribosomal RNA small subunit methyltransferase A (Pediococcus pentosaceus (strain ATCC 25745 / CCUG 21536 / LMG 10740 / 183-1w)).